Here is a 309-residue protein sequence, read N- to C-terminus: Probable manganese-dependent inorganic pyrophosphatase (309 aa).

The Mn(2+) site is built by His-9, Asp-13, Asp-15, Asp-75, His-97, and Asp-149.

Belongs to the PPase class C family. Mn(2+) serves as cofactor.

The protein localises to the cytoplasm. The enzyme catalyses diphosphate + H2O = 2 phosphate + H(+). The sequence is that of Probable manganese-dependent inorganic pyrophosphatase from Staphylococcus epidermidis (strain ATCC 35984 / DSM 28319 / BCRC 17069 / CCUG 31568 / BM 3577 / RP62A).